The primary structure comprises 356 residues: Glutamine synthetase root isozyme 3 (356 aa).

Residues 19 to 99 (IIAEYIWIGG…VMCDCYTPAG (81 aa)) form the GS beta-grasp domain. Residues 106–356 (KRYNAAKIFS…IAETTIIWKP (251 aa)) form the GS catalytic domain.

This sequence belongs to the glutamine synthetase family. In terms of assembly, homooctamer. In terms of tissue distribution, found in all the tissues examined with higher expression found in tissues of the root.

It is found in the cytoplasm. It catalyses the reaction L-glutamate + NH4(+) + ATP = L-glutamine + ADP + phosphate + H(+). Its function is as follows. Plays a role in the flow of nitrogen into nitrogenous organic compounds. The chain is Glutamine synthetase root isozyme 3 (GLN4) from Zea mays (Maize).